The primary structure comprises 62 residues: Sperm protamine P1 (62 aa).

The interval 1–62 (MARYRHSRSR…RYSRRRRRRY (62 aa)) is disordered.

Belongs to the protamine P1 family. In terms of tissue distribution, testis.

Its subcellular location is the nucleus. The protein resides in the chromosome. Protamines substitute for histones in the chromatin of sperm during the haploid phase of spermatogenesis. They compact sperm DNA into a highly condensed, stable and inactive complex. This is Sperm protamine P1 (PRM1) from Lagostrophus fasciatus (Banded hare-wallaby).